The chain runs to 617 residues: Secretogranin-2 (617 aa).

An N-terminal signal peptide occupies residues 1 to 30 (MAGAKAYRLGAVLLLIHLIFLISGAEAASF). Tyrosine 153 carries the sulfotyrosine modification. Phosphoserine occurs at positions 176 and 270. Composition is skewed to basic and acidic residues over residues 261-286 (TQTQEEVRDSKENTEKNEQINEEMKR) and 295-307 (EENRRESKDQLSE). Residues 261 to 307 (TQTQEEVRDSKENTEKNEQINEEMKRSGQLGLPDEENRRESKDQLSE) form a disordered region. A phosphoserine mark is found at serine 434, serine 532, serine 555, and serine 556.

The protein belongs to the chromogranin/secretogranin protein family. Interacts with Secretogranin III/SCG3.

The protein resides in the secreted. Neuroendocrine protein of the granin family that regulates the biogenesis of secretory granules. The polypeptide is Secretogranin-2 (Scg2) (Mus musculus (Mouse)).